An 84-amino-acid polypeptide reads, in one-letter code: Cell division topological specificity factor (84 aa).

This sequence belongs to the MinE family.

In terms of biological role, prevents the cell division inhibition by proteins MinC and MinD at internal division sites while permitting inhibition at polar sites. This ensures cell division at the proper site by restricting the formation of a division septum at the midpoint of the long axis of the cell. This chain is Cell division topological specificity factor, found in Burkholderia cenocepacia (strain HI2424).